The primary structure comprises 418 residues: Glycine betaine transport ATP-binding protein OpuAA (418 aa).

Residues 34 to 270 (KTKKEILKAT…PSNEYVEKFV (237 aa)) form the ABC transporter domain. Position 66-73 (66-73 (GLSGSGKS)) interacts with ATP. 2 consecutive CBS domains span residues 284–340 (IMKR…DLSL) and 344–403 (LNTE…INAE).

Belongs to the ABC transporter superfamily. In terms of assembly, the complex is composed of two ATP-binding proteins (OpuAA), two transmembrane proteins (OpuAB) and a solute-binding protein (OpuAC).

It catalyses the reaction a quaternary ammonium(out) + ATP + H2O = a quaternary ammonium(in) + ADP + phosphate + H(+). Involved in a multicomponent binding-protein-dependent transport system for glycine betaine. Probably responsible for energy coupling to the transport system. This chain is Glycine betaine transport ATP-binding protein OpuAA (opuAA), found in Bacillus subtilis (strain 168).